A 318-amino-acid polypeptide reads, in one-letter code: Galactose-1-phosphate uridylyltransferase (318 aa).

3 residues coordinate Zn(2+): C32, C35, and H90. A UDP-alpha-D-glucose-binding site is contributed by N130. H141 lines the Zn(2+) pocket. The active-site Tele-UMP-histidine intermediate is H143. Q145 provides a ligand contact to UDP-alpha-D-glucose.

Belongs to the galactose-1-phosphate uridylyltransferase type 1 family. Requires Zn(2+) as cofactor.

The catalysed reaction is alpha-D-galactose 1-phosphate + UDP-alpha-D-glucose = alpha-D-glucose 1-phosphate + UDP-alpha-D-galactose. Its pathway is carbohydrate metabolism; galactose metabolism. This is Galactose-1-phosphate uridylyltransferase (galT) from Thermotoga maritima (strain ATCC 43589 / DSM 3109 / JCM 10099 / NBRC 100826 / MSB8).